A 378-amino-acid chain; its full sequence is D-alanine--D-alanine ligase (378 aa).

Residues 157–368 (KVVFESAGLS…YGDLIDELIH (212 aa)) enclose the ATP-grasp domain. Position 189-244 (189-244 (VDKLGFPVFVKPARAGSSMGISKVDSMEGLDAAIDEARRHDLKLVIEAGIVGREIE)) interacts with ATP. Mg(2+)-binding residues include D322, E335, and N337.

This sequence belongs to the D-alanine--D-alanine ligase family. The cofactor is Mg(2+). Mn(2+) serves as cofactor.

The protein resides in the cytoplasm. It catalyses the reaction 2 D-alanine + ATP = D-alanyl-D-alanine + ADP + phosphate + H(+). The protein operates within cell wall biogenesis; peptidoglycan biosynthesis. Its function is as follows. Cell wall formation. In Paenarthrobacter aurescens (strain TC1), this protein is D-alanine--D-alanine ligase.